The sequence spans 239 residues: Ribonuclease HII (239 aa).

The RNase H type-2 domain occupies 30–221; sequence GPVAGVDEVG…VRRLVTAGTP (192 aa). Residues aspartate 36, glutamate 37, and aspartate 130 each coordinate a divalent metal cation.

It belongs to the RNase HII family. Mn(2+) is required as a cofactor. Mg(2+) serves as cofactor.

The protein resides in the cytoplasm. The enzyme catalyses Endonucleolytic cleavage to 5'-phosphomonoester.. Its function is as follows. Endonuclease that specifically degrades the RNA of RNA-DNA hybrids. The chain is Ribonuclease HII from Mycobacterium sp. (strain KMS).